The sequence spans 251 residues: Uridylate kinase (251 aa).

Residue lysine 19–glycine 22 coordinates ATP. Glycine 61 contributes to the UMP binding site. Residues glycine 62 and arginine 66 each coordinate ATP. UMP-binding positions include aspartate 81 and threonine 142–threonine 149. ATP-binding residues include threonine 169, tyrosine 175, and aspartate 178.

The protein belongs to the UMP kinase family. As to quaternary structure, homohexamer.

The protein resides in the cytoplasm. The enzyme catalyses UMP + ATP = UDP + ADP. The protein operates within pyrimidine metabolism; CTP biosynthesis via de novo pathway; UDP from UMP (UMPK route): step 1/1. Inhibited by UTP. In terms of biological role, catalyzes the reversible phosphorylation of UMP to UDP. This is Uridylate kinase from Anaeromyxobacter dehalogenans (strain 2CP-C).